We begin with the raw amino-acid sequence, 270 residues long: 3-methyl-2-oxobutanoate hydroxymethyltransferase (270 aa).

Positions 53 and 92 each coordinate Mg(2+). 3-methyl-2-oxobutanoate contacts are provided by residues 53–54 (DS), Asp-92, and Lys-120. Glu-122 lines the Mg(2+) pocket. Glu-189 acts as the Proton acceptor in catalysis.

Belongs to the PanB family. As to quaternary structure, homodecamer; pentamer of dimers. The cofactor is Mg(2+).

The protein resides in the cytoplasm. The catalysed reaction is 3-methyl-2-oxobutanoate + (6R)-5,10-methylene-5,6,7,8-tetrahydrofolate + H2O = 2-dehydropantoate + (6S)-5,6,7,8-tetrahydrofolate. Its pathway is cofactor biosynthesis; (R)-pantothenate biosynthesis; (R)-pantoate from 3-methyl-2-oxobutanoate: step 1/2. Its function is as follows. Catalyzes the reversible reaction in which hydroxymethyl group from 5,10-methylenetetrahydrofolate is transferred onto alpha-ketoisovalerate to form ketopantoate. In Saccharophagus degradans (strain 2-40 / ATCC 43961 / DSM 17024), this protein is 3-methyl-2-oxobutanoate hydroxymethyltransferase.